The sequence spans 1505 residues: Homeobox protein cut-like 1 (1505 aa).

Residues 56 to 407 adopt a coiled-coil conformation; the sequence is LLKSFQGEID…ALRISNSDLS (352 aa). 2 stretches are compositionally biased toward polar residues: residues 396 to 407 and 440 to 451; these read NAALRISNSDLS and EQASNTNGTHQF. Disordered regions lie at residues 396 to 455, 512 to 552, 646 to 669, and 682 to 704; these read NAAL…SPAG, YSTN…EEMD, PKRR…GSDE, and LQVQ…NSDD. Low complexity predominate over residues 516–546; that stretch reads SISSQSPLQQSPDVNGMAPSPSQSESAGSVS. Phosphoserine is present on glutamate 540. The CUT 1 DNA-binding region spans 542-629; it reads AGSVSEGEEM…ILALRSIQGR (88 aa). Residues 694–703 show a composition bias toward low complexity; that stretch reads SSASGSGNSD. Serine 763 is subject to Phosphoserine. The segment at 768–802 is disordered; that stretch reads SAAPEAGASALPNPPALKKEAQDAPGLDPQGAADC. Residues lysine 785, lysine 811, and lysine 842 each participate in a glycyl lysine isopeptide (Lys-Gly) (interchain with G-Cter in SUMO2) cross-link. Basic and acidic residues predominate over residues 815–853; the sequence is GRSGAWKDHWWSAVQPERRNAASSEEAKAEETGGGKEKG. A disordered region spans residues 815-930; that stretch reads GRSGAWKDHW…KPTKPSVPPL (116 aa). Composition is skewed to polar residues over residues 868 to 877 and 887 to 911; these read SQLQGPSSSE and SPYS…NSPL. The residue at position 909 (serine 909) is a Phosphoserine. A DNA-binding region (CUT 2) is located at residues 934 to 1021; that stretch reads QYEVYMYQEV…QGVLPVQGQQ (88 aa). Over residues 1036-1049 the composition is skewed to polar residues; sequence LQQGCVSSESTPKT. The disordered stretch occupies residues 1036–1110; the sequence is LQQGCVSSES…QPTTPLPLSG (75 aa). A compositionally biased stretch (low complexity) spans 1050–1066; that stretch reads SASCSPAPESPMSSSES. Phosphoserine occurs at positions 1059 and 1069. Residues 1117-1204 constitute a DNA-binding region (CUT 3); it reads QELVAMSPEL…VEKLMDMKRM (88 aa). Positions 1210–1247 are disordered; that stretch reads MKRRHSSVSDSQPCEPPSVGTEYSQGASPQPQHQLKKP. Positions 1230–1242 are enriched in polar residues; it reads TEYSQGASPQPQH. The segment at residues 1244–1303 is a DNA-binding region (homeobox); sequence LKKPRVVLAPEEKEALKRAYQQKPYPSPKTIEDLATQLNLKTSTVINWFHNYRSRIRREL. Serine 1270 bears the Phosphoserine mark. Lysine 1284 participates in a covalent cross-link: Glycyl lysine isopeptide (Lys-Gly) (interchain with G-Cter in SUMO2). The tract at residues 1312-1480 is disordered; the sequence is SQGQAGASDS…SRDNPLRKKK (169 aa). The span at 1316-1333 shows a compositional bias: low complexity; sequence AGASDSPSARSGRAAPSS. Serine 1337 carries the post-translational modification Phosphoserine. Composition is skewed to basic and acidic residues over residues 1353–1368 and 1384–1394; these read EEPK…EVPR and DDARDDDHEGG. Composition is skewed to low complexity over residues 1405 to 1436 and 1443 to 1455; these read PASA…AAPS and NSSS…RPSS. Serine 1455 carries the phosphoserine modification. The segment covering 1467 to 1476 has biased composition (basic and acidic residues); the sequence is GARDSRDNPL. A phosphoserine mark is found at serine 1486 and serine 1496.

It belongs to the CUT homeobox family. Interacts with BANP. Interacts with SATB1 (via DNA-binding domains); the interaction inhibits the attachment of both proteins to DNA. Phosphorylated by PKA. Post-translationally, as cells progress into S phase, a fraction of CUX1 molecules is proteolytically processed into N-terminally truncated proteins of 110 kDa by CTSL. Cell cycle-dependent processing of CUX1 serves to generate a CDP/Cux p110 with distinct DNA binding and transcriptional properties.

It is found in the nucleus. Functionally, transcription factor involved in the control of neuronal differentiation in the brain. Regulates dendrite development and branching, and dendritic spine formation in cortical layers II-III. Also involved in the control of synaptogenesis. In addition, it has probably a broad role in mammalian development as a repressor of developmentally regulated gene expression. May act by preventing binding of positively-activing CCAAT factors to promoters. Component of nf-munr repressor; binds to the matrix attachment regions (MARs) (5' and 3') of the immunoglobulin heavy chain enhancer. Represses T-cell receptor (TCR) beta enhancer function by binding to MARbeta, an ATC-rich DNA sequence located upstream of the TCR beta enhancer. Binds to the TH enhancer; may require the basic helix-loop-helix protein TCF4 as a coactivator. Plays a role in cell cycle progression, in particular at the G1/S transition. As cells progress into S phase, a fraction of CUX1 molecules is proteolytically processed into N-terminally truncated proteins of 110 kDa. While CUX1 only transiently binds to DNA and carries the CCAAT-displacement activity, CDP/Cux p110 makes a stable interaction with DNA and stimulates expression of genes such as POLA1. The protein is Homeobox protein cut-like 1 of Homo sapiens (Human).